We begin with the raw amino-acid sequence, 152 residues long: Superoxide dismutase [Cu-Zn] 2 (152 aa).

Cu cation-binding residues include His-45, His-47, and His-62. A disulfide bridge links Cys-56 with Cys-145. Zn(2+) is bound by residues His-62, His-70, His-79, and Asp-82. His-119 contacts Cu cation.

It belongs to the Cu-Zn superoxide dismutase family. Homodimer. Cu cation is required as a cofactor. The cofactor is Zn(2+).

It localises to the cytoplasm. The enzyme catalyses 2 superoxide + 2 H(+) = H2O2 + O2. Functionally, destroys radicals which are normally produced within the cells and which are toxic to biological systems. This is Superoxide dismutase [Cu-Zn] 2 (SODCC.5) from Solanum lycopersicum (Tomato).